We begin with the raw amino-acid sequence, 694 residues long: MGKRFPSGWFSPRVHPPRRQRSPMTNQATPGTASVWNNIEGIGFGGDYNPEQWPVSVRLEDLELMQEAGVNFLSVGIFSWALLEPAEGQYDFGWLDDVMDNLHGIGVKVALATATAAPPAWLVRKHPEILPVTADGTTLGPGSRRHYTPSSAVYRKYAAGITRVLAERYKDHPALALWHVDNELGCHVSEFYGEEDAAAFRLWLERRYGTIDALNAAWGTAFWSQHYGSFEEILPPGVAPSTLNPGQQLDFQRFNSWALMDYYRSLVAVLREVTPAVPCTTNLMASSATKSMDYFSWAKDLDVIANDHYLVAADPERHIELAFSADLTRGIAGGDPWILMEHSTSAVNWQPRNQPKMPGEMLRNSLAHVARGADAVMFFQWRQSFAGSEKFHSAMVPHGGRDTRVWREVVDLGAALQLLAPVRGSRVESRAAIVFDYEAWWASEIDSKPSIDVRYLDLLRAFHRSLFLRGVSVDMVHPSASLDGYDLVLVCTLYSVTDEAAANIAAAAAGGATVLVSYFSGITDEKDHVRLGGYPGAFRELLGVRVEEFHPLLAGSQLKLSDGTVSSIWSEHVHLDGAEAFQTFTGYPLEGVPSLTRRAVGTGAAWYLATFPDRDGIESLVDRLLAESGVSPVAEADAGVELTRRRSADGGSFLFAINHTRAAASVRASGTDVLSGERFTGTVEAGSVAVIAED.

A disordered region spans residues 1–31 (MGKRFPSGWFSPRVHPPRRQRSPMTNQATPG). A compositionally biased stretch (polar residues) spans 22–31 (SPMTNQATPG). Substrate-binding residues include arginine 144 and asparagine 182. Glutamate 183 serves as the catalytic Proton donor. The Nucleophile role is filled by glutamate 341. Substrate is bound by residues tryptophan 349 and 389–392 (EKFH).

This sequence belongs to the glycosyl hydrolase 42 family. As to quaternary structure, homotrimer.

It catalyses the reaction Hydrolysis of terminal non-reducing beta-D-galactose residues in beta-D-galactosides.. Its activity is regulated as follows. Strongly inhibited by glucose. No activity is lost during treatment with 100 mM EDTA after 2 hours. Activity not considerably affected by metal ions (5 mM), including Na(+), K(+), Mg(2+), Co(2+) and Ca(2+). Completely inhibited by Cu(2+) and Zn(2+) (5 mM) and is strongly inhibited by Mn(2+) (11%), Fe(2+) (25%) and Ni(2+) (38%) in comparison with the activity in the absence of cations (100%). Activity not affected by dithiothreitol, beta-mercaptoethanol and L-cysteine whereas reduced glutathione almost completely inactivates it. With ONPG as substrate, the addition of ethanol up to 20% still slightly stimulates activity. The activity increases up to 120% in the presence of 8% v/v ethanol at pH 5.5. In terms of biological role, hydrolyzes p-nitrophenyl-beta-D-galactopyranoside (PNPG), o-nitrophenyl-beta-D-galactopyranoside (ONPG) and chromogen 5-bromo-4-chloro-3-indolyl-beta-D-galactopyranoside (X-gal), with highest activity against PNPG. Also acts on p-nitrophenyl-beta-D-glucopyranoside (PNPGlu) and o-nitrophenyl-beta-D-glucopyranoside (ONPGlu), but with significantly lower activity. The chain is Beta-galactosidase from Arthrobacter sp.